The sequence spans 626 residues: L-amino-acid oxidase 4 (626 aa).

The signal sequence occupies residues 1–18 (KSFFRSLVAASLVIVSYS). The N-linked (GlcNAc...) asparagine glycan is linked to Asn54. 6 residues coordinate FAD: Gly75, Glu94, Ala95, Arg102, Met122, and Arg123. Arg123 is a binding site for L-glutamate. An L-glutamine-binding site is contributed by Arg123. Residue Arg123 participates in L-lysine binding. Residue Arg123 participates in L-phenylalanine binding. Residues Asn164, Asn193, and Asn331 are each glycosylated (N-linked (GlcNAc...) asparagine). Position 334 (Val334) interacts with FAD. Tyr457 serves as a coordination point for L-glutamate. L-glutamine is bound at residue Tyr457. Tyr457 contacts L-lysine. Residue Tyr457 participates in L-phenylalanine binding. An FAD-binding site is contributed by Glu551. Position 558 (Ala558) interacts with L-phenylalanine. Positions 559 and 560 each coordinate FAD.

It belongs to the flavin monoamine oxidase family. FIG1 subfamily. In terms of assembly, homodimer. It depends on FAD as a cofactor. Post-translationally, out of the 4 glycosylated residues, Asn-54 is hypermannosylated. The presence of a hypermannosylated N-glycan on Asn-54 leads to adoption of a more active conformation in the absence of acid activation.

The protein resides in the secreted. It catalyses the reaction an L-alpha-amino acid + O2 + H2O = a 2-oxocarboxylate + H2O2 + NH4(+). The enzyme catalyses L-lysine + O2 + H2O = 6-amino-2-oxohexanoate + H2O2 + NH4(+). It carries out the reaction L-glutamate + O2 + H2O = H2O2 + 2-oxoglutarate + NH4(+). The catalysed reaction is L-arginine + O2 + H2O = 5-guanidino-2-oxopentanoate + H2O2 + NH4(+). It catalyses the reaction L-leucine + O2 + H2O = 4-methyl-2-oxopentanoate + H2O2 + NH4(+). The enzyme catalyses L-asparagine + O2 + H2O = 2-oxosuccinamate + H2O2 + NH4(+). It carries out the reaction L-histidine + O2 + H2O = 3-(imidazol-5-yl)pyruvate + H2O2 + NH4(+). The catalysed reaction is L-isoleucine + O2 + H2O = (S)-3-methyl-2-oxopentanoate + H2O2 + NH4(+). It catalyses the reaction L-methionine + O2 + H2O = 4-methylsulfanyl-2-oxobutanoate + H2O2 + NH4(+). The enzyme catalyses L-phenylalanine + O2 + H2O = 3-phenylpyruvate + H2O2 + NH4(+). It carries out the reaction L-tyrosine + O2 + H2O = 3-(4-hydroxyphenyl)pyruvate + H2O2 + NH4(+). The catalysed reaction is L-glutamine + O2 + H2O = 2-oxoglutaramate + H2O2 + NH4(+). It catalyses the reaction L-alanine + O2 + H2O = pyruvate + H2O2 + NH4(+). LAAO4 is activated by exposure to acidic pH, the detergent sodium dodecyl sulfate, or freezing. Catalyzes the oxidative deamination of L-amino acids with molecular oxygen to the corresponding alpha-keto acids and ammonia. L-glutamine shows the highest relative activity but LAAO4 has a broad substrate specificity, including L-amino acids with big aromatic, acidic and basic side chains. Methyl esters of these L-amino acids are also accepted, ethyl esters are converted but with lower activity, whereas D-Amino acids are not converted. No reaction is detected for small polar amino acids such as L-cysteine or L-aspartate, and very little for small, branched hydrophobic amino acids like L-valine. In Hebeloma cylindrosporum, this protein is L-amino-acid oxidase 4.